The primary structure comprises 228 residues: Endolytic peptidoglycan transglycosylase RlpA (228 aa).

The first 23 residues, 1–23, serve as a signal peptide directing secretion; the sequence is MIQRHKLIVLIFLLIFCLSGCNT.

The protein belongs to the RlpA family.

In terms of biological role, lytic transglycosylase with a strong preference for naked glycan strands that lack stem peptides. This Rickettsia felis (strain ATCC VR-1525 / URRWXCal2) (Rickettsia azadi) protein is Endolytic peptidoglycan transglycosylase RlpA.